Consider the following 140-residue polypeptide: Dehydratase ustZ (140 aa).

Positions 18 to 113 (PGISTEDYRN…GPDHEKFADT (96 aa)) constitute an EthD domain.

This sequence belongs to the tpcK family.

The enzyme catalyses naphtopyrone YWA1 = norrubrofusarin + H2O + H(+). The protein operates within secondary metabolite biosynthesis. Functionally, dehydratase; part of the gene cluster that mediates the biosynthesis of ustilaginoidins, dimeric gamma-naphthopyrones isolated from different fungal species. The first step in the biosynthesis of ustilaginoidins is the production of gamma-naphthopyrone precursor YWA1 by the non-reducing polyketide synthase ustP, via condensation of one acetyl-CoA starter unit with 6 malonyl-CoA units. YWA1 is then probably substrate of the ustZ to yield norrubrofusarin via a dehydration reaction. A key enzyme in the biosynthetic pathway is the laccase ustL, which catalyzes the oxidative dimerization of norrubrofusarin to ustilaginoidin A. It can produce the M- and P-atropisomers in varying amounts, depending on the reaction conditions. For the biosynthesis of 3-methylustilaginoid in derivatives such as chaetochromin A, a methylated derivative of YWA1 is required. The C-methylation is considered to be catalyzed by ustM, the phosphopantetheine attachment site of which indicates that it acts on the growing polyketide chain before release of the product. For the biosynthesis of chaetochromin A, it is assumed that saturation of the D2 double bond takes place before dimerization, and is probably catalyzed by an external reductase because no candidate gene was identified within the cluster. The protein is Dehydratase ustZ of Ustilaginoidea virens (Rice false smut fungus).